Here is a 131-residue protein sequence, read N- to C-terminus: MTVKLLFQLFQLYFLLIYSSLEVEFKCTEDRKPISVNLKLHNPTAVTVSYKVRCTSADIFRVQPPLGFVKPSETVSIVIWYQNQDKKDAISKNHYFAFYHTNSDGRTARELWANSKVEGVRRLPASFLSTK.

One can recognise an MSP domain in the interval 14–130 (FLLIYSSLEV…RRLPASFLST (117 aa)).

This is an uncharacterized protein from Caenorhabditis elegans.